We begin with the raw amino-acid sequence, 472 residues long: Alanine--anticapsin ligase (472 aa).

Glu109 serves as a coordination point for Mg(2+). ATP-binding residues include Lys138 and Lys178. Residues 142-355 enclose the ATP-grasp domain; that stretch reads RAAFNRAGVK…MAQLLLDVLC (214 aa). Leu182 lines the Mg(2+) pocket. ATP is bound by residues 184–185, 226–229, and Gln268; these read SS and EEFL. Substrate contacts are provided by residues Glu273 and 309–311; that span reads HTE. Mg(2+) contacts are provided by Glu311 and Glu324. Position 328–331 (328–331) interacts with substrate; it reads RFAG.

As to quaternary structure, monomer or homodimer. Mg(2+) serves as cofactor.

The enzyme catalyses L-anticapsin + L-alanine + ATP = bacilysin + ADP + phosphate + H(+). Its pathway is antibiotic biosynthesis; bacilysin biosynthesis. Its function is as follows. Part of the bacABCDEFG operon responsible for the biosynthesis of bacilysin, an irreversible inactivator of the glutaminase domain of glucosamine synthetase. Catalyzes the formation of alpha-dipeptides from various L-amino acids in the presence of ATP. In vivo catalyzes the ligation of L-alanine and L-anticapsin (epoxycyclohexanonyl-Ala) to produce the final bacilysin antibiotic (L-Ala-L-4S-cyclohexenonyl-Ala dipeptide). The protein is Alanine--anticapsin ligase of Bacillus amyloliquefaciens (Bacillus velezensis).